Reading from the N-terminus, the 322-residue chain is Uracil-DNA glycosylase (322 aa).

Asp-142 functions as the Proton acceptor in the catalytic mechanism.

The protein belongs to the uracil-DNA glycosylase (UDG) superfamily. UNG family.

The protein localises to the mitochondrion. The protein resides in the nucleus. It catalyses the reaction Hydrolyzes single-stranded DNA or mismatched double-stranded DNA and polynucleotides, releasing free uracil.. Functionally, excises uracil residues from the DNA which can arise as a result of misincorporation of dUMP residues by DNA polymerase or due to deamination of cytosine. This is Uracil-DNA glycosylase (ung1) from Schizosaccharomyces pombe (strain 972 / ATCC 24843) (Fission yeast).